The primary structure comprises 111 residues: Probable 4-amino-4-deoxy-L-arabinose-phosphoundecaprenol flippase subunit ArnE (111 aa).

Over 1-35 (MIWLTLVFASLLSVAGQLCQKQATCFATVNKRRKH) the chain is Cytoplasmic. The helical transmembrane segment at 36-56 (IVLWLGLALACLGLAMVLWLL) threads the bilayer. The region spanning 40–109 (LGLALACLGL…IIGGIVILGS (70 aa)) is the EamA domain. Topologically, residues 57 to 60 (VLQN) are periplasmic. A helical membrane pass occupies residues 61–81 (VPVGIAYPMLSLNFVWVTLAA). Over 82-87 (VKLWHE) the chain is Cytoplasmic. A helical membrane pass occupies residues 88-108 (PVSLRHWCGVAFIIGGIVILG). Topologically, residues 109-111 (STV) are periplasmic.

Belongs to the ArnE family. As to quaternary structure, heterodimer of ArnE and ArnF.

It is found in the cell inner membrane. Its pathway is bacterial outer membrane biogenesis; lipopolysaccharide biosynthesis. In terms of biological role, translocates 4-amino-4-deoxy-L-arabinose-phosphoundecaprenol (alpha-L-Ara4N-phosphoundecaprenol) from the cytoplasmic to the periplasmic side of the inner membrane. This chain is Probable 4-amino-4-deoxy-L-arabinose-phosphoundecaprenol flippase subunit ArnE, found in Escherichia coli O6:H1 (strain CFT073 / ATCC 700928 / UPEC).